The chain runs to 282 residues: Elongation factor Ts (282 aa).

The interval 81 to 84 (TDFV) is involved in Mg(2+) ion dislocation from EF-Tu. Positions 218 to 270 (KPAQPAQVAEVAAAPPAEPVADQPAAEPPAESVAPEPVVAESADAEPAPAAEG) are enriched in low complexity. The segment at 218 to 282 (KPAQPAQVAE…SKKGSTKKKK (65 aa)) is disordered. Residues 273–282 (SKKGSTKKKK) are compositionally biased toward basic residues.

The protein belongs to the EF-Ts family.

The protein localises to the cytoplasm. In terms of biological role, associates with the EF-Tu.GDP complex and induces the exchange of GDP to GTP. It remains bound to the aminoacyl-tRNA.EF-Tu.GTP complex up to the GTP hydrolysis stage on the ribosome. In Synechococcus sp. (strain JA-3-3Ab) (Cyanobacteria bacterium Yellowstone A-Prime), this protein is Elongation factor Ts.